The chain runs to 160 residues: Large ribosomal subunit protein uL16 (160 aa).

This sequence belongs to the universal ribosomal protein uL16 family. As to quaternary structure, part of the 50S ribosomal subunit.

Functionally, binds 23S rRNA and is also seen to make contacts with the A and possibly P site tRNAs. The polypeptide is Large ribosomal subunit protein uL16 (Prochlorococcus marinus (strain MIT 9301)).